The sequence spans 161 residues: Nucleotide-binding protein PBPRA2024 (161 aa).

Belongs to the YajQ family.

Its function is as follows. Nucleotide-binding protein. This is Nucleotide-binding protein PBPRA2024 from Photobacterium profundum (strain SS9).